Reading from the N-terminus, the 645-residue chain is Threonine--tRNA ligase (645 aa).

The 61-residue stretch at M1–T61 folds into the TGS domain. The segment at D243 to P536 is catalytic. Positions 336, 387, and 513 each coordinate Zn(2+).

This sequence belongs to the class-II aminoacyl-tRNA synthetase family. In terms of assembly, homodimer. Zn(2+) is required as a cofactor.

It localises to the cytoplasm. The catalysed reaction is tRNA(Thr) + L-threonine + ATP = L-threonyl-tRNA(Thr) + AMP + diphosphate + H(+). In terms of biological role, catalyzes the attachment of threonine to tRNA(Thr) in a two-step reaction: L-threonine is first activated by ATP to form Thr-AMP and then transferred to the acceptor end of tRNA(Thr). Also edits incorrectly charged L-seryl-tRNA(Thr). The chain is Threonine--tRNA ligase from Gluconobacter oxydans (strain 621H) (Gluconobacter suboxydans).